Reading from the N-terminus, the 91-residue chain is DNA-directed RNA polymerase subunit omega (91 aa).

The protein belongs to the RNA polymerase subunit omega family. In terms of assembly, the RNAP catalytic core consists of 2 alpha, 1 beta, 1 beta' and 1 omega subunit. When a sigma factor is associated with the core the holoenzyme is formed, which can initiate transcription.

The catalysed reaction is RNA(n) + a ribonucleoside 5'-triphosphate = RNA(n+1) + diphosphate. Promotes RNA polymerase assembly. Latches the N- and C-terminal regions of the beta' subunit thereby facilitating its interaction with the beta and alpha subunits. This Photorhabdus laumondii subsp. laumondii (strain DSM 15139 / CIP 105565 / TT01) (Photorhabdus luminescens subsp. laumondii) protein is DNA-directed RNA polymerase subunit omega.